Reading from the N-terminus, the 197-residue chain is MIGRISGLLLEKFPPLVLVDVQGVGYEIDVPMSTFYNLPAVGTQITLHTHFVVREDAHLLFGFATEGERQAFRQLVKISGVGARTALALLSGLSVADLHQTVSNQDPARLIRIPGIGKKTAERLLLELRDKLDLGVSAIPGAAGARRPSTMGSDVLNALLSLGYNDREANWAVSQLSVDLSVSDGIRQALKFLSKEK.

The domain I stretch occupies residues 1–64 (MIGRISGLLL…EDAHLLFGFA (64 aa)). A domain II region spans residues 65–142 (TEGERQAFRQ…DLGVSAIPGA (78 aa)). Positions 143–153 (AGARRPSTMGS) are flexible linker. Positions 153-197 (SDVLNALLSLGYNDREANWAVSQLSVDLSVSDGIRQALKFLSKEK) are domain III.

The protein belongs to the RuvA family. Homotetramer. Forms an RuvA(8)-RuvB(12)-Holliday junction (HJ) complex. HJ DNA is sandwiched between 2 RuvA tetramers; dsDNA enters through RuvA and exits via RuvB. An RuvB hexamer assembles on each DNA strand where it exits the tetramer. Each RuvB hexamer is contacted by two RuvA subunits (via domain III) on 2 adjacent RuvB subunits; this complex drives branch migration. In the full resolvosome a probable DNA-RuvA(4)-RuvB(12)-RuvC(2) complex forms which resolves the HJ.

The protein localises to the cytoplasm. The RuvA-RuvB-RuvC complex processes Holliday junction (HJ) DNA during genetic recombination and DNA repair, while the RuvA-RuvB complex plays an important role in the rescue of blocked DNA replication forks via replication fork reversal (RFR). RuvA specifically binds to HJ cruciform DNA, conferring on it an open structure. The RuvB hexamer acts as an ATP-dependent pump, pulling dsDNA into and through the RuvAB complex. HJ branch migration allows RuvC to scan DNA until it finds its consensus sequence, where it cleaves and resolves the cruciform DNA. The polypeptide is Holliday junction branch migration complex subunit RuvA (Nitrosospira multiformis (strain ATCC 25196 / NCIMB 11849 / C 71)).